Here is a 249-residue protein sequence, read N- to C-terminus: Diaminopimelate epimerase (249 aa).

Asn11 and Asn60 together coordinate substrate. The active-site Proton donor is Cys69. Substrate-binding positions include 70-71 (GN), Asn164, and 182-183 (ER). Cys192 acts as the Proton acceptor in catalysis. 193–194 (GT) contacts substrate.

The protein belongs to the diaminopimelate epimerase family. As to quaternary structure, homodimer.

The protein resides in the cytoplasm. The catalysed reaction is (2S,6S)-2,6-diaminopimelate = meso-2,6-diaminopimelate. The protein operates within amino-acid biosynthesis; L-lysine biosynthesis via DAP pathway; DL-2,6-diaminopimelate from LL-2,6-diaminopimelate: step 1/1. Functionally, catalyzes the stereoinversion of LL-2,6-diaminopimelate (L,L-DAP) to meso-diaminopimelate (meso-DAP), a precursor of L-lysine and an essential component of the bacterial peptidoglycan. This Campylobacter lari (strain RM2100 / D67 / ATCC BAA-1060) protein is Diaminopimelate epimerase.